A 281-amino-acid polypeptide reads, in one-letter code: DegV domain-containing protein YqaC (281 aa).

The 277-residue stretch at 3–279 (LAVITDSSAD…LNTVAYGISP (277 aa)) folds into the DegV domain. 2 residues coordinate hexadecanoate: T60 and S93.

May bind long-chain fatty acids, such as palmitate, and may play a role in lipid transport or fatty acid metabolism. In Lactococcus lactis subsp. lactis (strain IL1403) (Streptococcus lactis), this protein is DegV domain-containing protein YqaC (yqaC).